We begin with the raw amino-acid sequence, 70 residues long: Protein SlyX homolog (70 aa).

The interval 51-70 (RMREAEANRPGPTNEPPPHY) is disordered.

The protein belongs to the SlyX family.

The chain is Protein SlyX homolog from Nitrobacter hamburgensis (strain DSM 10229 / NCIMB 13809 / X14).